A 223-amino-acid polypeptide reads, in one-letter code: MTIANLIDHTALKPHTQKSEIKKLIEEAKAYQFASVCVNPTWVEFAAEELKGTEIDVCTVIGFPLGANTTETKAFETKDAIAKGATEVDMVINIAALKDGNDDFVEADIRAVVEAAKGKALVKVIIETCLLTDEEKERACRLAVAAGADFVKTSTGFSTGGATAEDIALMRKTVGPDIGVKASGGIRTKEDVETMISNGATRIGASAGVSIVSGAEGKNEDNY.

Asp89 acts as the Proton donor/acceptor in catalysis. Lys152 (schiff-base intermediate with acetaldehyde) is an active-site residue. Lys181 (proton donor/acceptor) is an active-site residue.

The protein belongs to the DeoC/FbaB aldolase family. DeoC type 1 subfamily.

The protein resides in the cytoplasm. The enzyme catalyses 2-deoxy-D-ribose 5-phosphate = D-glyceraldehyde 3-phosphate + acetaldehyde. The protein operates within carbohydrate degradation; 2-deoxy-D-ribose 1-phosphate degradation; D-glyceraldehyde 3-phosphate and acetaldehyde from 2-deoxy-alpha-D-ribose 1-phosphate: step 2/2. Functionally, catalyzes a reversible aldol reaction between acetaldehyde and D-glyceraldehyde 3-phosphate to generate 2-deoxy-D-ribose 5-phosphate. The sequence is that of Deoxyribose-phosphate aldolase 2 from Bacillus licheniformis (strain ATCC 14580 / DSM 13 / JCM 2505 / CCUG 7422 / NBRC 12200 / NCIMB 9375 / NCTC 10341 / NRRL NRS-1264 / Gibson 46).